Consider the following 450-residue polypeptide: Phosphoglucosamine mutase (450 aa).

Ser101 acts as the Phosphoserine intermediate in catalysis. Mg(2+) is bound by residues Ser101, Asp240, Asp242, and Asp244. Residue Ser101 is modified to Phosphoserine.

This sequence belongs to the phosphohexose mutase family. The cofactor is Mg(2+). In terms of processing, activated by phosphorylation.

It carries out the reaction alpha-D-glucosamine 1-phosphate = D-glucosamine 6-phosphate. Its function is as follows. Catalyzes the conversion of glucosamine-6-phosphate to glucosamine-1-phosphate. The polypeptide is Phosphoglucosamine mutase (Streptococcus equi subsp. equi (strain 4047)).